A 94-amino-acid chain; its full sequence is Putative pterin-4-alpha-carbinolamine dehydratase (94 aa).

This sequence belongs to the pterin-4-alpha-carbinolamine dehydratase family.

The enzyme catalyses (4aS,6R)-4a-hydroxy-L-erythro-5,6,7,8-tetrahydrobiopterin = (6R)-L-erythro-6,7-dihydrobiopterin + H2O. This chain is Putative pterin-4-alpha-carbinolamine dehydratase, found in Caulobacter vibrioides (strain ATCC 19089 / CIP 103742 / CB 15) (Caulobacter crescentus).